The primary structure comprises 432 residues: Enolase (432 aa).

Position 163 (Q163) interacts with (2R)-2-phosphoglycerate. E205 serves as the catalytic Proton donor. 3 residues coordinate Mg(2+): D242, E285, and D312. 4 residues coordinate (2R)-2-phosphoglycerate: K337, R366, S367, and K388. The Proton acceptor role is filled by K337.

It belongs to the enolase family. Requires Mg(2+) as cofactor.

It is found in the cytoplasm. Its subcellular location is the secreted. It localises to the cell surface. It catalyses the reaction (2R)-2-phosphoglycerate = phosphoenolpyruvate + H2O. It functions in the pathway carbohydrate degradation; glycolysis; pyruvate from D-glyceraldehyde 3-phosphate: step 4/5. In terms of biological role, catalyzes the reversible conversion of 2-phosphoglycerate (2-PG) into phosphoenolpyruvate (PEP). It is essential for the degradation of carbohydrates via glycolysis. In Bifidobacterium adolescentis (strain ATCC 15703 / DSM 20083 / NCTC 11814 / E194a), this protein is Enolase.